The sequence spans 935 residues: Protein translocase subunit SecA (935 aa).

Residues Gln86, Gly104–Thr108, and Asp494 contribute to the ATP site. The segment at Glu879 to His935 is disordered.

This sequence belongs to the SecA family. Monomer and homodimer. Part of the essential Sec protein translocation apparatus which comprises SecA, SecYEG and auxiliary proteins SecDF. Other proteins may also be involved.

It localises to the cell membrane. The protein localises to the cytoplasm. It carries out the reaction ATP + H2O + cellular proteinSide 1 = ADP + phosphate + cellular proteinSide 2.. Its function is as follows. Part of the Sec protein translocase complex. Interacts with the SecYEG preprotein conducting channel. Has a central role in coupling the hydrolysis of ATP to the transfer of proteins into and across the cell membrane, serving as an ATP-driven molecular motor driving the stepwise translocation of polypeptide chains across the membrane. The chain is Protein translocase subunit SecA from Leifsonia xyli subsp. xyli (strain CTCB07).